Reading from the N-terminus, the 203-residue chain is Guanylate kinase (203 aa).

The region spanning 5–183 (GVLYIISAPS…AVEELKSVVV (179 aa)) is the Guanylate kinase-like domain. Residue 12 to 19 (APSGAGKT) coordinates ATP.

It belongs to the guanylate kinase family.

It is found in the cytoplasm. The enzyme catalyses GMP + ATP = GDP + ADP. Essential for recycling GMP and indirectly, cGMP. The sequence is that of Guanylate kinase from Geobacter metallireducens (strain ATCC 53774 / DSM 7210 / GS-15).